We begin with the raw amino-acid sequence, 159 residues long: Probable chemoreceptor glutamine deamidase CheD 1 (159 aa).

The protein belongs to the CheD family.

The catalysed reaction is L-glutaminyl-[protein] + H2O = L-glutamyl-[protein] + NH4(+). Its function is as follows. Probably deamidates glutamine residues to glutamate on methyl-accepting chemotaxis receptors (MCPs), playing an important role in chemotaxis. This chain is Probable chemoreceptor glutamine deamidase CheD 1, found in Methanosarcina acetivorans (strain ATCC 35395 / DSM 2834 / JCM 12185 / C2A).